A 195-amino-acid chain; its full sequence is 7-methyl-GTP pyrophosphatase (195 aa).

The active-site Proton acceptor is D70.

This sequence belongs to the Maf family. YceF subfamily. The cofactor is a divalent metal cation.

The protein resides in the cytoplasm. It catalyses the reaction N(7)-methyl-GTP + H2O = N(7)-methyl-GMP + diphosphate + H(+). Functionally, nucleoside triphosphate pyrophosphatase that hydrolyzes 7-methyl-GTP (m(7)GTP). May have a dual role in cell division arrest and in preventing the incorporation of modified nucleotides into cellular nucleic acids. This Shewanella sp. (strain MR-7) protein is 7-methyl-GTP pyrophosphatase.